We begin with the raw amino-acid sequence, 585 residues long: Testis-specific serine kinase substrate (585 aa).

A compositionally biased stretch (low complexity) spans 91–108; it reads EPDSSGTDSTTEDSGPLA. The tract at residues 91 to 126 is disordered; sequence EPDSSGTDSTTEDSGPLALPGPPASPTTPWAPEDPD. Phosphoserine occurs at positions 224, 281, and 309. Disordered stretches follow at residues 262–309 and 559–585; these read SRHG…PSLS and LEGS…GSEQ.

Post-translationally, phosphorylated on serine residue(s) by STK22A/TSSK1 and STK22B/TSSK2.

It is found in the cytoplasm. The protein resides in the cytoskeleton. Its subcellular location is the microtubule organizing center. It localises to the centrosome. The protein localises to the centriole. May play a role in testicular physiology, most probably in the process of spermatogenesis or spermatid development. This Rattus norvegicus (Rat) protein is Testis-specific serine kinase substrate (Tsks).